The primary structure comprises 180 residues: GTP cyclohydrolase 1 (180 aa).

Residues cysteine 71, histidine 74, and cysteine 142 each coordinate Zn(2+).

The protein belongs to the GTP cyclohydrolase I family. In terms of assembly, homomer.

The enzyme catalyses GTP + H2O = 7,8-dihydroneopterin 3'-triphosphate + formate + H(+). It participates in cofactor biosynthesis; 7,8-dihydroneopterin triphosphate biosynthesis; 7,8-dihydroneopterin triphosphate from GTP: step 1/1. The polypeptide is GTP cyclohydrolase 1 (Helicobacter pylori (strain P12)).